Consider the following 206-residue polypeptide: Ribosomal RNA small subunit methyltransferase G (206 aa).

Residues Gly-73, Leu-78, 124 to 125 (VE), and Arg-139 contribute to the S-adenosyl-L-methionine site.

Belongs to the methyltransferase superfamily. RNA methyltransferase RsmG family.

Its subcellular location is the cytoplasm. It catalyses the reaction guanosine(527) in 16S rRNA + S-adenosyl-L-methionine = N(7)-methylguanosine(527) in 16S rRNA + S-adenosyl-L-homocysteine. Specifically methylates the N7 position of guanine in position 527 of 16S rRNA. This chain is Ribosomal RNA small subunit methyltransferase G, found in Photorhabdus laumondii subsp. laumondii (strain DSM 15139 / CIP 105565 / TT01) (Photorhabdus luminescens subsp. laumondii).